The primary structure comprises 115 residues: NADH-ubiquinone oxidoreductase chain 3 (115 aa).

The next 3 membrane-spanning stretches (helical) occupy residues 4–24 (LMVM…AFWL), 55–75 (FFLV…LLPL), and 87–107 (MMLT…YEWM).

This sequence belongs to the complex I subunit 3 family. Core subunit of respiratory chain NADH dehydrogenase (Complex I) which is composed of 45 different subunits. Interacts with TMEM186. Interacts with TMEM242.

The protein resides in the mitochondrion inner membrane. The enzyme catalyses a ubiquinone + NADH + 5 H(+)(in) = a ubiquinol + NAD(+) + 4 H(+)(out). Functionally, core subunit of the mitochondrial membrane respiratory chain NADH dehydrogenase (Complex I) which catalyzes electron transfer from NADH through the respiratory chain, using ubiquinone as an electron acceptor. Essential for the catalytic activity of complex I. The sequence is that of NADH-ubiquinone oxidoreductase chain 3 from Peromyscus mexicanus (Mexican deer mouse).